The chain runs to 295 residues: MNEKLEKMRNGKGFIAALDQSGGSTPKALKLYGVNENEYSNDKEMFDLIHKMRTRIIKSPAFNESKILGAILFEQTMDSKIDGKYTADFLWEEKKVLPFLKIDKGLNDLDADGVQTMKPNPTLADLLKRANERHIFGTKMRSVIKKASPAGIARVVEQQFEVAAQVVAAGLIPIIEPEVDINNVDKVQCEEILRDEIRKHLNALPETSNVMLKLTLPTVENLYEEFTKHPRVVRVVALSGGYSREKANDILSKNKGVIASFSRALTEGLSAQQTDEEFNKTLAASIDGIYEASVK.

Glu-176 acts as the Proton acceptor in catalysis. The active-site Schiff-base intermediate with dihydroxyacetone-P is Lys-213.

The protein belongs to the class I fructose-bisphosphate aldolase family.

It catalyses the reaction beta-D-fructose 1,6-bisphosphate = D-glyceraldehyde 3-phosphate + dihydroxyacetone phosphate. The protein operates within carbohydrate degradation; glycolysis; D-glyceraldehyde 3-phosphate and glycerone phosphate from D-glucose: step 4/4. The protein is Fructose-bisphosphate aldolase class 1 of Fusobacterium nucleatum subsp. nucleatum (strain ATCC 25586 / DSM 15643 / BCRC 10681 / CIP 101130 / JCM 8532 / KCTC 2640 / LMG 13131 / VPI 4355).